We begin with the raw amino-acid sequence, 396 residues long: ATP phosphoribosyltransferase regulatory subunit (396 aa).

Belongs to the class-II aminoacyl-tRNA synthetase family. HisZ subfamily. In terms of assembly, heteromultimer composed of HisG and HisZ subunits.

It is found in the cytoplasm. It functions in the pathway amino-acid biosynthesis; L-histidine biosynthesis; L-histidine from 5-phospho-alpha-D-ribose 1-diphosphate: step 1/9. Functionally, required for the first step of histidine biosynthesis. May allow the feedback regulation of ATP phosphoribosyltransferase activity by histidine. The chain is ATP phosphoribosyltransferase regulatory subunit from Cellvibrio japonicus (strain Ueda107) (Pseudomonas fluorescens subsp. cellulosa).